The chain runs to 196 residues: Imidazoleglycerol-phosphate dehydratase (196 aa).

It belongs to the imidazoleglycerol-phosphate dehydratase family.

The protein resides in the cytoplasm. The catalysed reaction is D-erythro-1-(imidazol-4-yl)glycerol 3-phosphate = 3-(imidazol-4-yl)-2-oxopropyl phosphate + H2O. Its pathway is amino-acid biosynthesis; L-histidine biosynthesis; L-histidine from 5-phospho-alpha-D-ribose 1-diphosphate: step 6/9. The sequence is that of Imidazoleglycerol-phosphate dehydratase from Moorella thermoacetica (strain ATCC 39073 / JCM 9320).